A 110-amino-acid polypeptide reads, in one-letter code: Large ribosomal subunit protein uL22 (110 aa).

The protein belongs to the universal ribosomal protein uL22 family. Part of the 50S ribosomal subunit.

Its function is as follows. This protein binds specifically to 23S rRNA; its binding is stimulated by other ribosomal proteins, e.g. L4, L17, and L20. It is important during the early stages of 50S assembly. It makes multiple contacts with different domains of the 23S rRNA in the assembled 50S subunit and ribosome. Functionally, the globular domain of the protein is located near the polypeptide exit tunnel on the outside of the subunit, while an extended beta-hairpin is found that lines the wall of the exit tunnel in the center of the 70S ribosome. This is Large ribosomal subunit protein uL22 from Buchnera aphidicola subsp. Acyrthosiphon pisum (strain 5A).